A 455-amino-acid polypeptide reads, in one-letter code: Chromosomal replication initiator protein DnaA (455 aa).

Residues 1 to 75 are domain I, interacts with DnaA modulators; sequence MDTNNNIEKE…EILSQNKVGM (75 aa). Positions 75-106 are domain II; sequence MHLAHSVDVRIEVAPKIQISAQPNINYKAVKT. Residues 107–321 are domain III, AAA+ region; the sequence is SVKDSYTFEN…GAIIKISVNA (215 aa). ATP-binding residues include glycine 151, glycine 153, lysine 154, and threonine 155. A domain IV, binds dsDNA region spans residues 322 to 455; sequence NLMNAPIDLN…DKKTAFHSSE (134 aa).

This sequence belongs to the DnaA family. In terms of assembly, oligomerizes as a right-handed, spiral filament on DNA at oriC.

It is found in the cytoplasm. Functionally, plays an essential role in the initiation and regulation of chromosomal replication. ATP-DnaA binds to the origin of replication (oriC) to initiate formation of the DNA replication initiation complex once per cell cycle. Binds the DnaA box (a 9 base pair repeat at the origin) and separates the double-stranded (ds)DNA. Forms a right-handed helical filament on oriC DNA; dsDNA binds to the exterior of the filament while single-stranded (ss)DNA is stabiized in the filament's interior. The ATP-DnaA-oriC complex binds and stabilizes one strand of the AT-rich DNA unwinding element (DUE), permitting loading of DNA polymerase. After initiation quickly degrades to an ADP-DnaA complex that is not apt for DNA replication. Binds acidic phospholipids. The sequence is that of Chromosomal replication initiator protein DnaA from Helicobacter pylori (strain Shi470).